Reading from the N-terminus, the 160-residue chain is Cytochrome b6-f complex subunit 4 (160 aa).

3 helical membrane-spanning segments follow: residues 36–56, 95–115, and 128–148; these read LLYI…GLAV, LLGI…PFIE, and VAMT…IGAA.

The protein belongs to the cytochrome b family. PetD subfamily. In terms of assembly, the 4 large subunits of the cytochrome b6-f complex are cytochrome b6, subunit IV (17 kDa polypeptide, PetD), cytochrome f and the Rieske protein, while the 4 small subunits are PetG, PetL, PetM and PetN. The complex functions as a dimer.

It localises to the cellular thylakoid membrane. In terms of biological role, component of the cytochrome b6-f complex, which mediates electron transfer between photosystem II (PSII) and photosystem I (PSI), cyclic electron flow around PSI, and state transitions. The chain is Cytochrome b6-f complex subunit 4 from Synechococcus sp. (strain CC9902).